Consider the following 261-residue polypeptide: 3-hydroxyacyl-CoA dehydrogenase type-2 (261 aa).

N-acetylalanine is present on A2. Residues S20, L22, and D41 each contribute to the NAD(+) site. An N6-acetyllysine; alternate modification is found at K53. The residue at position 53 (K53) is an N6-succinyllysine; alternate. D64 and V65 together coordinate NAD(+). Position 69 is an N6-acetyllysine (K69). C91 contributes to the NAD(+) binding site. N6-acetyllysine occurs at positions 99 and 105. S155 contacts substrate. Residues Y168, K172, F201, and T203 each contribute to the NAD(+) site. Residue Y168 is the Proton acceptor of the active site. K212 is subject to N6-acetyllysine; alternate. An N6-succinyllysine; alternate modification is found at K212.

This sequence belongs to the short-chain dehydrogenases/reductases (SDR) family. As to quaternary structure, homotetramer. Component of mitochondrial ribonuclease P, a complex composed of TRMT10C/MRPP1, HSD17B10/MRPP2 and PRORP/MRPP3. Interacts with TRMT10C/MRPP1; forming the MRPP1-MRPP2 subcomplex of the mitochondrial ribonuclease P complex.

The protein resides in the mitochondrion. Its subcellular location is the mitochondrion matrix. It is found in the mitochondrion nucleoid. It catalyses the reaction a (3S)-3-hydroxyacyl-CoA + NAD(+) = a 3-oxoacyl-CoA + NADH + H(+). The enzyme catalyses (2S,3S)-3-hydroxy-2-methylbutanoyl-CoA + NAD(+) = 2-methyl-3-oxobutanoyl-CoA + NADH + H(+). It carries out the reaction testosterone + NAD(+) = androst-4-ene-3,17-dione + NADH + H(+). The catalysed reaction is 5alpha-androstane-3alpha,17beta-diol + NAD(+) = 17beta-hydroxy-5alpha-androstan-3-one + NADH + H(+). It catalyses the reaction 17beta-estradiol + NAD(+) = estrone + NADH + H(+). The enzyme catalyses cholate + NAD(+) = 3alpha,12alpha-dihydroxy-7-oxo-5beta-cholanate + NADH + H(+). It carries out the reaction (3S)-3-hydroxybutanoyl-CoA + NAD(+) = acetoacetyl-CoA + NADH + H(+). The catalysed reaction is (3S)-hydroxyoctanoyl-CoA + NAD(+) = 3-oxooctanoyl-CoA + NADH + H(+). It catalyses the reaction (3S)-hydroxyhexadecanoyl-CoA + NAD(+) = 3-oxohexadecanoyl-CoA + NADH + H(+). The enzyme catalyses 17beta-hydroxy-5alpha-androstan-3-one + NAD(+) = 5alpha-androstan-3,17-dione + NADH + H(+). It carries out the reaction 5alpha-pregnan-20beta-ol-3-one + NAD(+) = 5alpha-pregnane-3,20-dione + NADH + H(+). The catalysed reaction is 3alpha-hydroxy-5alpha-pregnan-20-one + NAD(+) = 5alpha-pregnane-3,20-dione + NADH + H(+). It catalyses the reaction cortisone + NAD(+) = 17alpha-hydroxypregn-4-en-3,11,20-trione-21-al + NADH + H(+). The enzyme catalyses 11-dehydrocorticosterone + NAD(+) = pregn-4-ene-3,11,20,21-tetraone + NADH + H(+). It carries out the reaction cortisol + NAD(+) = 11beta,17alpha-dihydroxypregn-4-ene-3,20,21-trione + NADH + H(+). The catalysed reaction is chenodeoxycholate + NAD(+) = 7-oxolithocholate + NADH + H(+). It catalyses the reaction ursodeoxycholate + NAD(+) = 7-oxolithocholate + NADH + H(+). The enzyme catalyses 3beta,7beta-dihydroxy-5beta-cholan-24-oate + NAD(+) = 3beta-hydroxy-7-oxo-5beta-cholan-24-oate + NADH + H(+). It functions in the pathway amino-acid degradation; L-isoleucine degradation. Its pathway is lipid metabolism; fatty acid beta-oxidation. The protein operates within steroid metabolism. It participates in lipid metabolism; bile acid biosynthesis. In terms of biological role, mitochondrial dehydrogenase involved in pathways of fatty acid, branched-chain amino acid and steroid metabolism. Acts as (S)-3-hydroxyacyl-CoA dehydrogenase in mitochondrial fatty acid beta-oxidation, a major degradation pathway of fatty acids. Catalyzes the third step in the beta-oxidation cycle, namely the reversible conversion of (S)-3-hydroxyacyl-CoA to 3-ketoacyl-CoA. Preferentially accepts straight medium- and short-chain acyl-CoA substrates with highest efficiency for (3S)-hydroxybutanoyl-CoA. Acts as 3-hydroxy-2-methylbutyryl-CoA dehydrogenase in branched-chain amino acid catabolic pathway. Catalyzes the oxidation of 3-hydroxy-2-methylbutanoyl-CoA into 2-methyl-3-oxobutanoyl-CoA, a step in isoleucine degradation pathway. Has hydroxysteroid dehydrogenase activity toward steroid hormones and bile acids. Catalyzes the oxidation of 3alpha-, 17beta-, 20beta- and 21-hydroxysteroids and 7alpha- and 7beta-hydroxy bile acids. Oxidizes allopregnanolone/brexanolone at the 3alpha-hydroxyl group, which is known to be critical for the activation of gamma-aminobutyric acid receptors (GABAARs) chloride channel. Has phospholipase C-like activity toward cardiolipin and its oxidized species. Likely oxidizes the 2'-hydroxyl in the head group of cardiolipin to form a ketone intermediate that undergoes nucleophilic attack by water and fragments into diacylglycerol, dihydroxyacetone and orthophosphate. Has higher affinity for cardiolipin with oxidized fatty acids and may degrade these species during the oxidative stress response to protect cells from apoptosis. By interacting with intracellular amyloid-beta, it may contribute to the neuronal dysfunction associated with Alzheimer disease (AD). Essential for structural and functional integrity of mitochondria. Its function is as follows. In addition to mitochondrial dehydrogenase activity, moonlights as a component of mitochondrial ribonuclease P, a complex that cleaves tRNA molecules in their 5'-ends. Together with TRMT10C/MRPP1, forms a subcomplex of the mitochondrial ribonuclease P, named MRPP1-MRPP2 subcomplex, which displays functions that are independent of the ribonuclease P activity. The MRPP1-MRPP2 subcomplex catalyzes the formation of N(1)-methylguanine and N(1)-methyladenine at position 9 (m1G9 and m1A9, respectively) in tRNAs; HSD17B10/MRPP2 acting as a non-catalytic subunit. The MRPP1-MRPP2 subcomplex also acts as a tRNA maturation platform: following 5'-end cleavage by the mitochondrial ribonuclease P complex, the MRPP1-MRPP2 subcomplex enhances the efficiency of 3'-processing catalyzed by ELAC2, retains the tRNA product after ELAC2 processing and presents the nascent tRNA to the mitochondrial CCA tRNA nucleotidyltransferase TRNT1 enzyme. Associates with mitochondrial DNA complexes at the nucleoids to initiate RNA processing and ribosome assembly. In Bos taurus (Bovine), this protein is 3-hydroxyacyl-CoA dehydrogenase type-2 (HSD17B10).